The chain runs to 488 residues: MVIFYFCGKTFMPARNRWMLLLPLLASAAYAEETPREPDLRSRPEFRLHEAEVKPIDREKVPGQVREKGKVLQIDGETLLKNPELLSRAMYSAVVSNNIAGIRVILPIYLQQAQQDKMLALYAQGILAQADGRVKEAISHYRELIAAQPDAPAVRMRLAAALFENRQNEAAADQFDRLKAENLPPQLMEQVELYRKALRERDAWKVNGGFSVTREHNINQAPKRQQYGKWTFPKQVDGTAVNYRLGAEKKWSLKNGWYTTAGGDVSGRVYPGNKKFNDMTAGVSGGIGFADRRKDAGLAVFHERRTYGNDAYSYTNGARLYFNRWQTPKWQTLSSAEWGRLKNTRRARSDNTHLQISNSLVFYRNARQYWMGGLDFYRERNPADRGDNFNRYGLRFAWGQEWGGSGLSSLLRLGAAKRHYEKPGFFSGFKGERRRDKELNTSLSLWHRALHFKGITPRLTLSHRETRSNDVFNEYEKNRAFVEFNKTF.

An N-terminal signal peptide occupies residues 1–31; it reads MVIFYFCGKTFMPARNRWMLLLPLLASAAYA. Residues 32–202 form an N-terminal domain region; the sequence is EETPREPDLR…LYRKALRERD (171 aa). 2 TPR repeats span residues 118–151 and 171–204; these read MLAL…QPDA and AADQ…RDAW. The C-terminal probable beta barrel, partially restores export of lipoproteins stretch occupies residues 203–488; sequence AWKVNGGFSV…RAFVEFNKTF (286 aa). The next 14 beta stranded transmembrane spans lie at 204-214, 241-252, 257-267, 280-291, 294-304, 316-325, 330-340, 354-364, 368-377, 393-402, 407-417, 439-448, 455-464, and 478-488; these read WKVNGGFSVTR, VNYRLGAEKKWS, WYTTAGGDVSG, TAGVSGGIGFAD, KDAGLAVFHER, NGARLYFNRW, WQTLSSAEWGR, LQISNSLVFYR, QYWMGGLDFY, GLRFAWGQEW, LSSLLRLGAAK, LNTSLSLWHR, ITPRLTLSHR, and NRAFVEFNKTF.

The protein belongs to the Slam family. Interacts with the C-terminal domain of surface lipoprotein TbpB.

It localises to the cell outer membrane. Its function is as follows. Required for correct export to the cell surface of some cell outer membrane lipoproteins both in Neisseria and heterologously in E.coli. The protein is Surface lipoprotein assembly modifier 1 of Neisseria meningitidis serogroup B (strain ATCC BAA-335 / MC58).